A 264-amino-acid chain; its full sequence is Apolipoprotein A-I (264 aa).

The first 18 residues, 1 to 18 (MKAVLLVVAALFLAGSQA), serve as a signal peptide directing secretion. Repeat copies occupy residues 67-88 (LRLSDNWDTLSTILTKLQADFG) and 89-110 (LATQEFWDTLEKETEWLKQIVS). Residues 67–264 (LRLSDNWDTL…DQASKQLAAQ (198 aa)) form a 10 X approximate tandem repeats region. A 3; half-length repeat occupies 111–121 (EDLQDVKHKVQ). 5 tandem repeats follow at residues 122–143 (PYLENFQKKVQEEVEHYREKVR), 144–165 (PLGIELRDGARQKLQELQEKLT), 166–187 (PLGEDLRDRTREHVDVLRTQLA), 188–207 (PFSEEMRQRLAKRLEELKDS), and 208–229 (ATLADYHAKASEHLKMLGEKAK). Met193 is modified (methionine sulfoxide). One copy of the 9; half-length repeat lies at 230–240 (PALEDLRQGLL). Repeat 10 spans residues 241-264 (PVLENLKASILSSIDQASKQLAAQ).

The protein belongs to the apolipoprotein A1/A4/E family. In terms of assembly, homodimer. Interacts with APOA1BP and CLU. Component of a sperm activating protein complex (SPAP), consisting of APOA1, an immunoglobulin heavy chain, an immunoglobulin light chain and albumin. Interacts with NDRG1. Interacts with SCGB3A2. Interacts with NAXE and YJEFN3. In terms of processing, glycosylated. Post-translationally, palmitoylated. Phosphorylation sites are present in the extracellular medium.

Its subcellular location is the secreted. Functionally, participates in the reverse transport of cholesterol from tissues to the liver for excretion by promoting cholesterol efflux from tissues and by acting as a cofactor for the lecithin cholesterol acyltransferase (LCAT). As part of the SPAP complex, activates spermatozoa motility. This is Apolipoprotein A-I (APOA1) from Cavia porcellus (Guinea pig).